Reading from the N-terminus, the 219-residue chain is Endonuclease V (219 aa).

D41 and D107 together coordinate Mg(2+).

This sequence belongs to the endonuclease V family. Mg(2+) is required as a cofactor.

Its subcellular location is the cytoplasm. The enzyme catalyses Endonucleolytic cleavage at apurinic or apyrimidinic sites to products with a 5'-phosphate.. Its function is as follows. DNA repair enzyme involved in the repair of deaminated bases. Selectively cleaves double-stranded DNA at the second phosphodiester bond 3' to a deoxyinosine leaving behind the intact lesion on the nicked DNA. This chain is Endonuclease V, found in Desulfurococcus amylolyticus (strain DSM 18924 / JCM 16383 / VKM B-2413 / 1221n) (Desulfurococcus kamchatkensis).